Reading from the N-terminus, the 430-residue chain is MSEAKGVGGIDPRATPGSAGAGERPPMGTVSRAGDGELYAPMPSKHMVINLGPSHPAMHGVTRAVVELNGEIIEEMKLDIGFLHRGFEKSCENVTWGQVFPYTDRLNYVSSIMNNVGFALAVEKLAKLEIPERARYLRVITSEIHRICDHLTLVGAMAMELGAMTVFLYGIEARDLLWDRLAELCGARLTSNYARIGGVARDMPEGWQEKTLKVLDRVVAIREEIGQLLNRNRIFIDRCLNTGKVSREDALELGFTGPCLRASGEPYDIRKAAPYLVYDRLDFDIPVGSNGDNFDRYLMRMEEMRQSDKIIRQCFEQMAPGEIIVQDFRYALPPKPLVYGTIEGVMAHFKLVMEGIKVPAGEVYSYTEAANGELGFYVVSDGGGRPYKLGLRAPGWPMLAALPVMTKGSLLSDLIPTFDSINMIGGEVEQ.

The disordered stretch occupies residues 1-36 (MSEAKGVGGIDPRATPGSAGAGERPPMGTVSRAGDG).

It belongs to the complex I 49 kDa subunit family. NDH-1 is composed of 14 different subunits. Subunits NuoB, C, D, E, F, and G constitute the peripheral sector of the complex.

Its subcellular location is the cell inner membrane. The catalysed reaction is a quinone + NADH + 5 H(+)(in) = a quinol + NAD(+) + 4 H(+)(out). Functionally, NDH-1 shuttles electrons from NADH, via FMN and iron-sulfur (Fe-S) centers, to quinones in the respiratory chain. The immediate electron acceptor for the enzyme in this species is believed to be ubiquinone. Couples the redox reaction to proton translocation (for every two electrons transferred, four hydrogen ions are translocated across the cytoplasmic membrane), and thus conserves the redox energy in a proton gradient. This is NADH-quinone oxidoreductase subunit D 1 from Anaeromyxobacter dehalogenans (strain 2CP-C).